Here is a 227-residue protein sequence, read N- to C-terminus: Thiamine-phosphate synthase (227 aa).

4-amino-2-methyl-5-(diphosphooxymethyl)pyrimidine is bound by residues 46–50 (QLRDK) and Asn-87. Residues Asp-88 and Asp-107 each coordinate Mg(2+). Ser-126 is a binding site for 4-amino-2-methyl-5-(diphosphooxymethyl)pyrimidine. 152-154 (TPT) contributes to the 2-[(2R,5Z)-2-carboxy-4-methylthiazol-5(2H)-ylidene]ethyl phosphate binding site. Position 155 (Lys-155) interacts with 4-amino-2-methyl-5-(diphosphooxymethyl)pyrimidine. Gly-183 is a 2-[(2R,5Z)-2-carboxy-4-methylthiazol-5(2H)-ylidene]ethyl phosphate binding site.

It belongs to the thiamine-phosphate synthase family. Mg(2+) is required as a cofactor.

It carries out the reaction 2-[(2R,5Z)-2-carboxy-4-methylthiazol-5(2H)-ylidene]ethyl phosphate + 4-amino-2-methyl-5-(diphosphooxymethyl)pyrimidine + 2 H(+) = thiamine phosphate + CO2 + diphosphate. The enzyme catalyses 2-(2-carboxy-4-methylthiazol-5-yl)ethyl phosphate + 4-amino-2-methyl-5-(diphosphooxymethyl)pyrimidine + 2 H(+) = thiamine phosphate + CO2 + diphosphate. The catalysed reaction is 4-methyl-5-(2-phosphooxyethyl)-thiazole + 4-amino-2-methyl-5-(diphosphooxymethyl)pyrimidine + H(+) = thiamine phosphate + diphosphate. It functions in the pathway cofactor biosynthesis; thiamine diphosphate biosynthesis; thiamine phosphate from 4-amino-2-methyl-5-diphosphomethylpyrimidine and 4-methyl-5-(2-phosphoethyl)-thiazole: step 1/1. Its function is as follows. Condenses 4-methyl-5-(beta-hydroxyethyl)thiazole monophosphate (THZ-P) and 2-methyl-4-amino-5-hydroxymethyl pyrimidine pyrophosphate (HMP-PP) to form thiamine monophosphate (TMP). The protein is Thiamine-phosphate synthase of Mycolicibacterium smegmatis (strain ATCC 700084 / mc(2)155) (Mycobacterium smegmatis).